The following is a 330-amino-acid chain: Glycerol-3-phosphate dehydrogenase [NAD(P)+] (330 aa).

Trp-11, Arg-31, His-32, and Lys-105 together coordinate NADPH. Sn-glycerol 3-phosphate contacts are provided by Lys-105 and Gly-133. Residue Ala-137 coordinates NADPH. Lys-188, Asp-241, Ser-251, Arg-252, and Asn-253 together coordinate sn-glycerol 3-phosphate. Lys-188 acts as the Proton acceptor in catalysis. Arg-252 provides a ligand contact to NADPH. NADPH-binding residues include Leu-277 and Glu-279.

It belongs to the NAD-dependent glycerol-3-phosphate dehydrogenase family.

It is found in the cytoplasm. It catalyses the reaction sn-glycerol 3-phosphate + NAD(+) = dihydroxyacetone phosphate + NADH + H(+). It carries out the reaction sn-glycerol 3-phosphate + NADP(+) = dihydroxyacetone phosphate + NADPH + H(+). It functions in the pathway membrane lipid metabolism; glycerophospholipid metabolism. Catalyzes the reduction of the glycolytic intermediate dihydroxyacetone phosphate (DHAP) to sn-glycerol 3-phosphate (G3P), the key precursor for phospholipid synthesis. The sequence is that of Glycerol-3-phosphate dehydrogenase [NAD(P)+] from Orientia tsutsugamushi (strain Boryong) (Rickettsia tsutsugamushi).